Consider the following 88-residue polypeptide: Small integral membrane protein 13 (88 aa).

Residues 10–30 (LVFVATLLIVLLLMVCGWYFV) form a helical membrane-spanning segment. Polar residues predominate over residues 48–60 (TGSQEGDNEQPSG). Positions 48 to 88 (TGSQEGDNEQPSGSEAEEDPSASPHKMRSARQRRPPVDDGH) are disordered. A phosphoserine mark is found at Ser-59, Ser-61, and Ser-70. Positions 72-81 (HKMRSARQRR) are enriched in basic residues.

This sequence belongs to the SMIM13 family.

It is found in the membrane. The chain is Small integral membrane protein 13 (Smim13) from Rattus norvegicus (Rat).